A 398-amino-acid polypeptide reads, in one-letter code: Ribosomal RNA large subunit methyltransferase F (398 aa).

The segment covering 1-12 has biased composition (basic residues); that stretch reads MTPSRKPARPGA. Positions 1–85 are disordered; it reads MTPSRKPARP…RNLHGQGYDF (85 aa). 2 stretches are compositionally biased toward low complexity: residues 20-40 and 48-59; these read PSAKASRPKPSSQSKSKAQPK and QAKSQAKPQAKS.

It belongs to the methyltransferase superfamily. METTL16/RlmF family.

It localises to the cytoplasm. It carries out the reaction adenosine(1618) in 23S rRNA + S-adenosyl-L-methionine = N(6)-methyladenosine(1618) in 23S rRNA + S-adenosyl-L-homocysteine + H(+). Specifically methylates the adenine in position 1618 of 23S rRNA. The chain is Ribosomal RNA large subunit methyltransferase F from Shewanella loihica (strain ATCC BAA-1088 / PV-4).